Consider the following 122-residue polypeptide: Basic phospholipase A2 homolog myotoxin II (122 aa).

7 cysteine pairs are disulfide-bonded: Cys-26-Cys-116, Cys-28-Cys-44, Cys-43-Cys-95, Cys-49-Cys-122, Cys-50-Cys-88, Cys-57-Cys-81, and Cys-75-Cys-86. An important for membrane-damaging activities in eukaryotes and bacteria; heparin-binding region spans residues 105 to 118 (KKYRYNYLKPFCKK).

Belongs to the phospholipase A2 family. Group II subfamily. K49 sub-subfamily. Homodimer; non-covalently linked (probable alternative/compact dimer conformation). In terms of tissue distribution, expressed by the venom gland.

Its subcellular location is the secreted. Its activity is regulated as follows. Myotoxic activity is inhibited by suramin and rosmarinic acid. Cytotoxic and myotoxic activities are inhibited by pre-incubation with varespladib. Suramin inhibits this myotoxin by (i) direct blockage of the MDoS and MDiS, preventing the toxin/membrane interaction and disruption and (ii) formation of an oligomeric complex, resulting in a tetrameric configuration for which both MDoS and MDiS becomes physically inaccessible, thus avoiding any possibility of toxin-membrane interaction or disruption. Heparin completely inhibits the cytotoxic and bactericidal activities, but only partially the myotoxic, edema-inducing and lethal effects. In terms of biological role, snake venom phospholipase A2 (PLA2) homolog that lacks enzymatic activity. Shows high myotoxin activities. Also shows neurotoxicity, since it induces muscle paralysis when tested on mouse phrenic-diaphragm preparations. Displays edema-inducing activities. Also displays antimicrobial activity against E.coli and C.albicans, as well as antitumoral activity against some human and mice cell lines. In addition, it is effective as parasiticidal agent against Leishmania sp. and S.mansoni. It also disrupts negatively charged liposomes in a dose- and temperature-dependent manner and shows toxicity by intraperitoneal route. In contrast to other phospholipase A2-like toxins, this myotoxin does not require fatty acid binding to be active. The chain is Basic phospholipase A2 homolog myotoxin II from Bothrops moojeni (Lance-headed viper).